A 1145-amino-acid chain; its full sequence is Trafficking protein particle complex subunit 10 (1145 aa).

It belongs to the TMEM1 family. As to quaternary structure, part of the multisubunit TRAPP (transport protein particle) complex. Interacts with Shal (via C-terminal dendritic targeting motif). Co-expressed with Shal in the nervous system.

Its subcellular location is the golgi apparatus. The protein resides in the cis-Golgi network. It is found in the cell projection. It localises to the dendrite. The protein localises to the perikaryon. Functionally, may play a role in vesicular transport from endoplasmic reticulum to Golgi. Has a role in one of the several mechanisms underlying dendritic localization of Shal channels. This is Trafficking protein particle complex subunit 10 (SIDL) from Drosophila melanogaster (Fruit fly).